We begin with the raw amino-acid sequence, 499 residues long: Lysine--tRNA ligase (499 aa).

2 residues coordinate Mg(2+): E409 and E416.

It belongs to the class-II aminoacyl-tRNA synthetase family. In terms of assembly, homodimer. It depends on Mg(2+) as a cofactor.

The protein resides in the cytoplasm. The enzyme catalyses tRNA(Lys) + L-lysine + ATP = L-lysyl-tRNA(Lys) + AMP + diphosphate. In Thioalkalivibrio sulfidiphilus (strain HL-EbGR7), this protein is Lysine--tRNA ligase.